Reading from the N-terminus, the 452-residue chain is Pup--protein ligase (452 aa).

E9 is a binding site for Mg(2+). R53 contacts ATP. A Mg(2+)-binding site is contributed by Y55. The Proton acceptor role is filled by D57. E63 contributes to the Mg(2+) binding site. ATP-binding residues include T66 and W419.

Belongs to the Pup ligase/Pup deamidase family. Pup-conjugating enzyme subfamily.

The catalysed reaction is ATP + [prokaryotic ubiquitin-like protein]-L-glutamate + [protein]-L-lysine = ADP + phosphate + N(6)-([prokaryotic ubiquitin-like protein]-gamma-L-glutamyl)-[protein]-L-lysine.. It participates in protein degradation; proteasomal Pup-dependent pathway. The protein operates within protein modification; protein pupylation. Catalyzes the covalent attachment of the prokaryotic ubiquitin-like protein modifier Pup to the proteasomal substrate proteins, thereby targeting them for proteasomal degradation. This tagging system is termed pupylation. The ligation reaction involves the side-chain carboxylate of the C-terminal glutamate of Pup and the side-chain amino group of a substrate lysine. In Mycobacteroides abscessus (strain ATCC 19977 / DSM 44196 / CCUG 20993 / CIP 104536 / JCM 13569 / NCTC 13031 / TMC 1543 / L948) (Mycobacterium abscessus), this protein is Pup--protein ligase.